Consider the following 674-residue polypeptide: tRNA 5-methylaminomethyl-2-thiouridine biosynthesis bifunctional protein MnmC (674 aa).

The tRNA (mnm(5)s(2)U34)-methyltransferase stretch occupies residues 1-248; sequence MAASSLPSHN…KREMCFGRYA (248 aa). An FAD-dependent cmnm(5)s(2)U34 oxidoreductase region spans residues 276-674; sequence IGAGLAGATV…AIRHWRSGKR (399 aa).

It in the N-terminal section; belongs to the methyltransferase superfamily. tRNA (mnm(5)s(2)U34)-methyltransferase family. This sequence in the C-terminal section; belongs to the DAO family. FAD serves as cofactor.

It is found in the cytoplasm. It catalyses the reaction 5-aminomethyl-2-thiouridine(34) in tRNA + S-adenosyl-L-methionine = 5-methylaminomethyl-2-thiouridine(34) in tRNA + S-adenosyl-L-homocysteine + H(+). Catalyzes the last two steps in the biosynthesis of 5-methylaminomethyl-2-thiouridine (mnm(5)s(2)U) at the wobble position (U34) in tRNA. Catalyzes the FAD-dependent demodification of cmnm(5)s(2)U34 to nm(5)s(2)U34, followed by the transfer of a methyl group from S-adenosyl-L-methionine to nm(5)s(2)U34, to form mnm(5)s(2)U34. This is tRNA 5-methylaminomethyl-2-thiouridine biosynthesis bifunctional protein MnmC from Hydrogenovibrio crunogenus (strain DSM 25203 / XCL-2) (Thiomicrospira crunogena).